The sequence spans 229 residues: Large ribosomal subunit protein uL1 (229 aa).

This sequence belongs to the universal ribosomal protein uL1 family. As to quaternary structure, part of the 50S ribosomal subunit.

Binds directly to 23S rRNA. The L1 stalk is quite mobile in the ribosome, and is involved in E site tRNA release. Functionally, protein L1 is also a translational repressor protein, it controls the translation of the L11 operon by binding to its mRNA. This chain is Large ribosomal subunit protein uL1, found in Streptococcus equi subsp. equi (strain 4047).